A 756-amino-acid polypeptide reads, in one-letter code: Catalase-peroxidase (756 aa).

The tryptophyl-tyrosyl-methioninium (Trp-Tyr) (with M-270) cross-link spans 91 to 244; sequence WHSAGTYRTG…LAAVQMGLIY (154 aa). The active-site Proton acceptor is the H92. Positions 198 to 230 are disordered; that stretch reads AQKKMQQPGDGTLVAEPENHANEESRTASGERN. The segment covering 214–223 has biased composition (basic and acidic residues); it reads PENHANEESR. Residues 244–270 constitute a cross-link (tryptophyl-tyrosyl-methioninium (Tyr-Met) (with W-91)); it reads YVNPEGPEGVPDPVASARDIRETFGRM. Position 285 (H285) interacts with heme b.

The protein belongs to the peroxidase family. Peroxidase/catalase subfamily. Homodimer or homotetramer. The cofactor is heme b. Formation of the three residue Trp-Tyr-Met cross-link is important for the catalase, but not the peroxidase activity of the enzyme.

It catalyses the reaction H2O2 + AH2 = A + 2 H2O. The catalysed reaction is 2 H2O2 = O2 + 2 H2O. Functionally, bifunctional enzyme with both catalase and broad-spectrum peroxidase activity. The protein is Catalase-peroxidase of Pseudomonas syringae pv. syringae (strain B728a).